The sequence spans 422 residues: UDP-N-acetylglucosamine 1-carboxyvinyltransferase (422 aa).

22–23 (KN) contributes to the phosphoenolpyruvate binding site. A UDP-N-acetyl-alpha-D-glucosamine-binding site is contributed by Arg95. Cys119 (proton donor) is an active-site residue. Cys119 bears the 2-(S-cysteinyl)pyruvic acid O-phosphothioketal mark. UDP-N-acetyl-alpha-D-glucosamine contacts are provided by residues 124-128 (RPIDQ), Asp309, and Val331.

This sequence belongs to the EPSP synthase family. MurA subfamily.

It is found in the cytoplasm. The enzyme catalyses phosphoenolpyruvate + UDP-N-acetyl-alpha-D-glucosamine = UDP-N-acetyl-3-O-(1-carboxyvinyl)-alpha-D-glucosamine + phosphate. It participates in cell wall biogenesis; peptidoglycan biosynthesis. Functionally, cell wall formation. Adds enolpyruvyl to UDP-N-acetylglucosamine. The protein is UDP-N-acetylglucosamine 1-carboxyvinyltransferase of Anaeromyxobacter sp. (strain K).